Here is a 470-residue protein sequence, read N- to C-terminus: uncharacterized protein (470 aa).

The stretch at 418 to 453 (SECCEEQEEKEKKKEKEKEKKKEKDDDDDQQNNNNN) forms a coiled coil. Positions 423 to 470 (EQEEKEKKKEKEKEKKKEKDDDDDQQNNNNNDQNGLGLGLGLNFGLNL) are disordered. A compositionally biased stretch (basic and acidic residues) spans 426–441 (EKEKKKEKEKEKKKEK). A compositionally biased stretch (low complexity) spans 448–457 (QNNNNNDQNG).

This is an uncharacterized protein from Acidianus bottle-shaped virus (isolate Italy/Pozzuoli) (ABV).